The primary structure comprises 430 residues: Asparagine--tRNA ligase (430 aa).

Belongs to the class-II aminoacyl-tRNA synthetase family. In terms of assembly, homodimer.

It is found in the cytoplasm. The catalysed reaction is tRNA(Asn) + L-asparagine + ATP = L-asparaginyl-tRNA(Asn) + AMP + diphosphate + H(+). The protein is Asparagine--tRNA ligase of Staphylococcus aureus (strain USA300).